The primary structure comprises 199 residues: Probable GTP-binding protein EngB (199 aa).

One can recognise an EngB-type G domain in the interval 21 to 196 (TKPEYAFIGR…LTYIDEINKQ (176 aa)). Residues 29-36 (GRSNVGKS), 56-60 (GKTQL), 74-77 (DLPG), 141-144 (TKID), and 175-177 (TSS) contribute to the GTP site. The Mg(2+) site is built by Ser-36 and Thr-58.

This sequence belongs to the TRAFAC class TrmE-Era-EngA-EngB-Septin-like GTPase superfamily. EngB GTPase family. It depends on Mg(2+) as a cofactor.

Necessary for normal cell division and for the maintenance of normal septation. The polypeptide is Probable GTP-binding protein EngB (Cytophaga hutchinsonii (strain ATCC 33406 / DSM 1761 / CIP 103989 / NBRC 15051 / NCIMB 9469 / D465)).